The following is a 265-amino-acid chain: GTP cyclohydrolase FolE2 (265 aa).

The protein belongs to the GTP cyclohydrolase IV family.

The enzyme catalyses GTP + H2O = 7,8-dihydroneopterin 3'-triphosphate + formate + H(+). The protein operates within cofactor biosynthesis; 7,8-dihydroneopterin triphosphate biosynthesis; 7,8-dihydroneopterin triphosphate from GTP: step 1/1. Functionally, converts GTP to 7,8-dihydroneopterin triphosphate. The sequence is that of GTP cyclohydrolase FolE2 from Bordetella petrii (strain ATCC BAA-461 / DSM 12804 / CCUG 43448).